The following is a 444-amino-acid chain: UDP-N-acetylmuramate--L-alanine ligase (444 aa).

110-116 serves as a coordination point for ATP; the sequence is GAHGKTS.

It belongs to the MurCDEF family.

Its subcellular location is the cytoplasm. It catalyses the reaction UDP-N-acetyl-alpha-D-muramate + L-alanine + ATP = UDP-N-acetyl-alpha-D-muramoyl-L-alanine + ADP + phosphate + H(+). Its pathway is cell wall biogenesis; peptidoglycan biosynthesis. Its function is as follows. Cell wall formation. This chain is UDP-N-acetylmuramate--L-alanine ligase, found in Streptococcus pneumoniae (strain ATCC 700669 / Spain 23F-1).